The primary structure comprises 212 residues: dITP/XTP pyrophosphatase (212 aa).

A substrate-binding site is contributed by 7 to 12; sequence SRNKKK. Residue D72 is the Proton acceptor of the active site. D72 contributes to the Mg(2+) binding site. Residues S73, 163–166, K187, and 192–193 contribute to the substrate site; these read FGYD and HR. The segment at 164-194 is disordered; it reads GYDPLFEPAEAPGQSSAELTPERKDELSHRG. Over residues 183–192 the composition is skewed to basic and acidic residues; that stretch reads TPERKDELSH.

It belongs to the HAM1 NTPase family. Homodimer. Mg(2+) serves as cofactor.

It catalyses the reaction XTP + H2O = XMP + diphosphate + H(+). The catalysed reaction is dITP + H2O = dIMP + diphosphate + H(+). The enzyme catalyses ITP + H2O = IMP + diphosphate + H(+). In terms of biological role, pyrophosphatase that catalyzes the hydrolysis of nucleoside triphosphates to their monophosphate derivatives, with a high preference for the non-canonical purine nucleotides XTP (xanthosine triphosphate), dITP (deoxyinosine triphosphate) and ITP. Seems to function as a house-cleaning enzyme that removes non-canonical purine nucleotides from the nucleotide pool, thus preventing their incorporation into DNA/RNA and avoiding chromosomal lesions. The protein is dITP/XTP pyrophosphatase of Corynebacterium urealyticum (strain ATCC 43042 / DSM 7109).